The following is a 189-amino-acid chain: GTPase NRas (189 aa).

GTP contacts are provided by residues 10 to 18 (GAGGVGKSA) and 29 to 30 (VD). Residues 32 to 40 (YDPTIEDSY) carry the Effector region motif. 57 to 61 (DTAGQ) contacts GTP. Position 89 is a phosphoserine (serine 89). 116–119 (NKCD) is a GTP binding site. The tract at residues 166 to 185 (YRMKKLNSSDDGTQGCMGLP) is hypervariable region. Lysine 170 is covalently cross-linked (Glycyl lysine isopeptide (Lys-Gly) (interchain with G-Cter in ubiquitin)). Cysteine 181 is lipidated: S-palmitoyl cysteine. The S-farnesyl cysteine moiety is linked to residue cysteine 186. The propeptide at 187-189 (VVM) is removed in mature form.

It belongs to the small GTPase superfamily. Ras family. Interacts (active GTP-bound form preferentially) with RGS14. Interacts (active GTP-bound form) with RASSF7. Interacts (active GTP-bound form) with both SHOC2 and PP1c (all isoforms) to form a tertiary complex; SHOC2 and PP1c preferably bind M-Ras/MRAS, but they also bind K-Ras/KRAS, N-Ras/NRAS and H-Ras/HRAS. Palmitoylated by the ZDHHC9-GOLGA7 complex. Depalmitoylated by ABHD17A, ABHD17B and ABHD17C. A continuous cycle of de- and re-palmitoylation regulates rapid exchange between plasma membrane and Golgi. In terms of processing, acetylation at Lys-104 prevents interaction with guanine nucleotide exchange factors (GEFs). Post-translationally, ubiquitinated by the BCR(LZTR1) E3 ubiquitin ligase complex at Lys-170 in a non-degradative manner, leading to inhibit Ras signaling by decreasing Ras association with membranes. Phosphorylation at Ser-89 enhances NRAS association with its downstream effectors.

The protein localises to the cell membrane. It is found in the golgi apparatus membrane. It catalyses the reaction GTP + H2O = GDP + phosphate + H(+). With respect to regulation, alternates between an inactive form bound to GDP and an active form bound to GTP. Activated by a guanine nucleotide-exchange factor (GEF) and inactivated by a GTPase-activating protein (GAP). Functionally, ras proteins bind GDP/GTP and possess intrinsic GTPase activity. The chain is GTPase NRas (NRAS) from Pongo abelii (Sumatran orangutan).